We begin with the raw amino-acid sequence, 1196 residues long: DNA polymerase beta (1196 aa).

The protein belongs to the DNA polymerase type-B family.

The catalysed reaction is DNA(n) + a 2'-deoxyribonucleoside 5'-triphosphate = DNA(n+1) + diphosphate. Functionally, DNA-directed DNA polymerase involved in viral DNA replication. The protein is DNA polymerase beta of African swine fever virus (isolate Pig/Kenya/KEN-50/1950) (ASFV).